We begin with the raw amino-acid sequence, 521 residues long: Bifunctional dihydrofolate reductase-thymidylate synthase (521 aa).

A DHFR domain is found at 17-194 (NYQVVVAGTR…IRHSFVSFVR (178 aa)). Valine 21 lines the substrate pocket. NADP(+) is bound by residues alanine 23 and 29 to 35 (GIGKDGV). Substrate is bound at residue aspartate 43. Residues 67-69 (RKT) and 88-91 (LTRS) contribute to the NADP(+) site. Substrate is bound at residue isoleucine 130. 131–138 (GGGQVLRE) is an NADP(+) binding site. Threonine 151 is a substrate binding site. Residues 197-521 (KSVAETHESN…HQKIEMKMAV (325 aa)) are thymidylate synthase. Arginine 258 lines the dUMP pocket. The active site involves cysteine 403. DUMP-binding positions include histidine 404, 422–426 (QRSAD), asparagine 434, and 464–466 (HVY).

It in the N-terminal section; belongs to the dihydrofolate reductase family. This sequence in the C-terminal section; belongs to the thymidylate synthase family.

It carries out the reaction (6S)-5,6,7,8-tetrahydrofolate + NADP(+) = 7,8-dihydrofolate + NADPH + H(+). It catalyses the reaction dUMP + (6R)-5,10-methylene-5,6,7,8-tetrahydrofolate = 7,8-dihydrofolate + dTMP. It functions in the pathway cofactor biosynthesis; tetrahydrofolate biosynthesis; 5,6,7,8-tetrahydrofolate from 7,8-dihydrofolate: step 1/1. Its function is as follows. Bifunctional enzyme. Involved in de novo dTMP biosynthesis. Key enzyme in folate metabolism. Can play two different roles depending on the source of dihydrofolate: de novo synthesis of tetrahydrofolate or recycling of the dihydrofolate released as one of the end products of the TS catalyzed reaction. Catalyzes an essential reaction for de novo glycine and purine synthesis, DNA precursor synthesis, and for the conversion of dUMP to dTMP. The protein is Bifunctional dihydrofolate reductase-thymidylate synthase (DRTS) of Zea mays (Maize).